Reading from the N-terminus, the 648-residue chain is Macrolide export ATP-binding/permease protein MacB (648 aa).

Residues 5–243 (LELKDIRRSY…AGGTEPVVNT (239 aa)) enclose the ABC transporter domain. Position 41–48 (41–48 (GASGSGKS)) interacts with ATP. 4 consecutive transmembrane segments (helical) span residues 273-293 (LLTMLGIIIGIASVVSIVVVG), 523-543 (LFLTLVAVISLVVGGIGVMNI), 576-596 (AVLVCLVGGALGITLSLLIAF), and 600-620 (LFLPGWEIGFSPLALLLAFLC).

Belongs to the ABC transporter superfamily. Macrolide exporter (TC 3.A.1.122) family. Homodimer. Part of the tripartite efflux system MacAB-TolC, which is composed of an inner membrane transporter, MacB, a periplasmic membrane fusion protein, MacA, and an outer membrane component, TolC. The complex forms a large protein conduit and can translocate molecules across both the inner and outer membranes. Interacts with MacA.

It localises to the cell inner membrane. Its function is as follows. Part of the tripartite efflux system MacAB-TolC. MacB is a non-canonical ABC transporter that contains transmembrane domains (TMD), which form a pore in the inner membrane, and an ATP-binding domain (NBD), which is responsible for energy generation. Confers resistance against macrolides. The sequence is that of Macrolide export ATP-binding/permease protein MacB from Shigella boydii serotype 4 (strain Sb227).